Consider the following 56-residue polypeptide: Conotoxin reg3.9 (56 aa).

Positions 1-8 are cleaved as a signal peptide; that stretch reads LLFPLSAL. The interval 1–22 is disordered; it reads LLFPLSALPLDGDQPADQPAER. The propeptide occupies 9-40; it reads PLDGDQPADQPAERMQDISPEQNFWFDLVERG. 3 disulfides stabilise this stretch: Cys-41–Cys-55, Cys-42–Cys-53, and Cys-47–Cys-56.

This sequence belongs to the conotoxin M superfamily. In terms of tissue distribution, expressed by the venom duct.

The protein resides in the secreted. The polypeptide is Conotoxin reg3.9 (Conus regius (Crown cone)).